The sequence spans 235 residues: RNA pyrophosphohydrolase (235 aa).

Residues 6–149 enclose the Nudix hydrolase domain; that stretch reads GFRPNVGIIL…KREVYQLALS (144 aa). A Nudix box motif is present at residues 38–59; it reads GGIKYGETPEQAMFRELHEEVG. The segment at 161–235 is disordered; that stretch reads APLSPYGRGG…PDDTAPKDNS (75 aa). The span at 171 to 196 shows a compositional bias: basic and acidic residues; sequence QHRERDGRDARDSRERSSDQGGRNEQ. Residues 203 to 220 show a composition bias toward low complexity; that stretch reads TVTTTTVIVETVSVSAPT.

This sequence belongs to the Nudix hydrolase family. RppH subfamily. Requires a divalent metal cation as cofactor.

Its function is as follows. Accelerates the degradation of transcripts by removing pyrophosphate from the 5'-end of triphosphorylated RNA, leading to a more labile monophosphorylated state that can stimulate subsequent ribonuclease cleavage. This is RNA pyrophosphohydrolase from Ralstonia pickettii (strain 12J).